A 479-amino-acid polypeptide reads, in one-letter code: Catalase A (479 aa).

Positions 1-21 (MSKILTTASGAPVADNQNSRS) are enriched in polar residues. The interval 1–25 (MSKILTTASGAPVADNQNSRSAGPR) is disordered. Catalysis depends on residues His53 and Asn126. Tyr336 provides a ligand contact to heme. Residues 350 to 376 (QLPVNAPRCPVNSYQRDGSMATGSYGS) form a disordered region. Positions 361-376 (NSYQRDGSMATGSYGS) are enriched in polar residues.

Belongs to the catalase family. The cofactor is heme.

The catalysed reaction is 2 H2O2 = O2 + 2 H2O. Activated by peroxide. In terms of biological role, the major expressed catalase protein in strain Corvallis in stationary phase. Decomposes hydrogen peroxide into water and oxygen; serves to protect cells from the toxic effects of hydrogen peroxide. This is Catalase A (katA) from Pseudomonas putida (Arthrobacter siderocapsulatus).